The sequence spans 478 residues: MIEVLLVTICLAAFPYQGSSIILESGNVNDYEVIYPRKVTALPKGAVQPKYEDAMQYELKVNGEPVVLHLEKNKGLFSKDYSETHYSPDGRKITTNPPVEDHCYYHGRIENDADSTASISACNGLKGHFKLQGETYLIEPLKLSDSEAHAVFKFENVEKEDEAPKMCGVTQNWESYEPIKKASQSNLTPEHQRYIELFLVVDHGMFMKYNGNSDKIRRRIHQMVNIMKEAYRYLYIDIALTGVEIWSNKDMINVQPAAPQTLDSFGEWRKTDLLNRKSHDNAQLLTSTDFNGPTIGLAYVGSMCDPKRSTAVIEDHSETDLLVAVTMAHELGHNLGIRHDTGSCSCGGYSCIMAPVISHDIAKYFSDCSYIQCWDFIMKDNPQCILNKQLRTDTVSTPVSGNELLEAGEECDCGTPGNPCCDAATCKLRPGAQCAEGLCCDQCRFMKEGTVCRRARGDDMDDYCNGISAGCPRNPFHA.

The first 20 residues, Met-1–Ser-20, serve as a signal peptide directing secretion. The propeptide occupies Ile-21–Leu-187. Disulfide bonds link Cys-304–Cys-384, Cys-344–Cys-368, and Cys-346–Cys-351. His-329 contributes to the Zn(2+) binding site. Glu-330 is an active-site residue. Zn(2+)-binding residues include His-333 and His-339. Positions Leu-390–Leu-405 are excised as a propeptide. The 82-residue stretch at Thr-397–Ala-478 folds into the Disintegrin domain. 6 disulfide bridges follow: Cys-411/Cys-426, Cys-413/Cys-421, Cys-420/Cys-443, Cys-434/Cys-440, Cys-439/Cys-464, and Cys-452/Cys-471. A Cell attachment site motif is present at residues Arg-456 to Asp-458.

Belongs to the venom metalloproteinase (M12B) family. P-II subfamily. P-IIa sub-subfamily. In terms of assembly, monomer. In terms of tissue distribution, expressed by the venom gland.

The protein localises to the secreted. Functionally, binds alpha-5/beta-1 (ITGAV/ITGB1), alpha-V/beta-3 (ITGAV/ITGB3) and alpha-M/beta-2 (ITGAM/ITGB2) integrins. Is a potent inhibitor of platelet aggregation induced by ADP, collagen, and thrombin. Induces neutrophil chemotaxis and inhibits the chemotaxis of human neutrophils toward fMLP, IL-8, and jarastatin itself. Directly activates an integrin-coupled signaling and modulate the MAPK pathway in different ways, leading the neutrophils to express different functional response. Induces Erk-2 translocation to nucleus and a delay of the spontaneous apoptosis of neutrophils. Increases the IL-8 mRNA levels in neutrophils. When injected simultaneously with melanoma cells in mice, jarastatin, flavoridin (FL) and kistrin (KR) significantly reduce tumor lung colonization. Inhibits mouse melanoma B16F10 cell growth in vitro. When it interacts with melanoma cells, it induces actin cytoskeleton rearrangement, increasing actin polymerization and PTK2/FAK1 phosphorylation. Interferes with NF-kappaB translocation in melanoma cells. The chain is Zinc metalloproteinase/disintegrin from Bothrops jararaca (Jararaca).